The primary structure comprises 300 residues: Lysenin-related protein 3 (300 aa).

The interval 12–35 (EEIEVDVVAVWKEGYVYENRGDTS) is N-terminal cap domain. Residues 36-109 (VEQKITMTKG…SQVIEHTVTI (74 aa)) form a beta-hairpin domain region. The tract at residues 110–158 (PPTSKFTRWKLNADVGGTDIEYMYLIDEVTPISVTQTIPQVIRSRAKIL) is N-terminal cap domain. A C-terminal receptor-binding domain region spans residues 159–299 (VGRQIHLGTT…EDKWILEVVN (141 aa)). An N-(acyl)-sphingosylphosphocholine contacts are provided by Lys187, Ser229, Tyr235, and Tyr284. Residues Cys274 and Cys285 are joined by a disulfide bond.

It belongs to the lysenin family. Binds to sphingomyelin as a monomer by using its C-terminal domain. Forms a nonamer when sphingomyelin/LRP-3 ratio is lower than ca 500. Oligomerization, but not binding, is influenced by the fluidity of sphingomyelin. In terms of tissue distribution, expressed by coelomocytes.

Its subcellular location is the secreted. The protein localises to the target cell membrane. Functionally, pore-forming toxin that specifically binds sphingomyelin in the plasma membrane of various cells. Has antibacterial and hemolytic activity. The chain is Lysenin-related protein 3 from Eisenia fetida (Red wiggler worm).